Consider the following 373-residue polypeptide: tRNA-specific 2-thiouridylase MnmA (373 aa).

ATP is bound by residues 12–19 (GMSGGVDS) and methionine 38. Residues 98-100 (NPD) are interaction with target base in tRNA. Cysteine 103 acts as the Nucleophile in catalysis. A disulfide bridge connects residues cysteine 103 and cysteine 200. Residue glycine 127 participates in ATP binding. Positions 150-152 (KDQ) are interaction with tRNA. Cysteine 200 acts as the Cysteine persulfide intermediate in catalysis. The segment at 312-313 (RY) is interaction with tRNA.

The protein belongs to the MnmA/TRMU family.

The protein resides in the cytoplasm. The enzyme catalyses S-sulfanyl-L-cysteinyl-[protein] + uridine(34) in tRNA + AH2 + ATP = 2-thiouridine(34) in tRNA + L-cysteinyl-[protein] + A + AMP + diphosphate + H(+). Catalyzes the 2-thiolation of uridine at the wobble position (U34) of tRNA, leading to the formation of s(2)U34. This is tRNA-specific 2-thiouridylase MnmA from Streptococcus pyogenes serotype M12 (strain MGAS2096).